Reading from the N-terminus, the 1651-residue chain is Vitellogenin-6 (1651 aa).

Residues 1 to 15 form the signal peptide; it reads MKFFIALALLGAALA. The 683-residue stretch at 34–716 folds into the Vitellogenin domain; the sequence is FRAGREYRYL…TTESVLPTEM (683 aa). Residues asparagine 252 and asparagine 1288 are each glycosylated (N-linked (GlcNAc...) asparagine). Positions 1340-1515 constitute a VWFD domain; that stretch reads ANCVVKSTKI…SYLYKDSKCN (176 aa). Cystine bridges form between cysteine 1342/cysteine 1479 and cysteine 1364/cysteine 1514. The interval 1527–1556 is disordered; that stretch reads FQRIEKNQEEEKDQEMNYEESRREQDDEPT.

In terms of tissue distribution, synthesized in Caenorhabditis only by 32 cells building the intestine of adult hermaphroditic individuals; they are cotranslationally secreted into the body cavity and subsequently taken up by the gonad.

Its subcellular location is the secreted. Functionally, precursor of the egg-yolk proteins that are sources of nutrients during embryonic development. May play a role in cholesterol uptake. May be involved in thermotolerance. This chain is Vitellogenin-6 (vit-6), found in Caenorhabditis elegans.